The chain runs to 437 residues: Serine--tRNA ligase (437 aa).

244–246 (TAE) is a binding site for L-serine. 275-277 (RSE) contributes to the ATP binding site. An L-serine-binding site is contributed by Glu298. Residue 362 to 365 (EISS) coordinates ATP. Ser397 is an L-serine binding site.

It belongs to the class-II aminoacyl-tRNA synthetase family. Type-1 seryl-tRNA synthetase subfamily. Homodimer. The tRNA molecule binds across the dimer.

The protein localises to the cytoplasm. It catalyses the reaction tRNA(Ser) + L-serine + ATP = L-seryl-tRNA(Ser) + AMP + diphosphate + H(+). The catalysed reaction is tRNA(Sec) + L-serine + ATP = L-seryl-tRNA(Sec) + AMP + diphosphate + H(+). The protein operates within aminoacyl-tRNA biosynthesis; selenocysteinyl-tRNA(Sec) biosynthesis; L-seryl-tRNA(Sec) from L-serine and tRNA(Sec): step 1/1. Its function is as follows. Catalyzes the attachment of serine to tRNA(Ser). Is also able to aminoacylate tRNA(Sec) with serine, to form the misacylated tRNA L-seryl-tRNA(Sec), which will be further converted into selenocysteinyl-tRNA(Sec). This chain is Serine--tRNA ligase, found in Nitrosomonas europaea (strain ATCC 19718 / CIP 103999 / KCTC 2705 / NBRC 14298).